A 903-amino-acid chain; its full sequence is MTDVTVKALAAEIQTSVDRLVQQFADAGIPKSAEDSVTAQEKQALLAHLNREHGSGPDKLTLQRKTRSTLNIQGTGGKSKSVQIEVRKKRTFVKRDPQEAERLAAEEQAKREAEEQARREAEEAAKREAEEKAKREAGDKAKREAEEQAKRDAADKAKREAAETSKVSNQQTDEVSKAAQAEKARREAEALELKRKAEEEARRKLEENARRVAEEARRMAEENATKWESGSEEESEDTSDYHVTTSQHARQAEDDSDREVEGGRGRARPAKVARQKKSNKHSESKADREEARAAVRGGKGGKRKGSSLQQGFNKPAQAVNRDVVIGETITVAELANKMAVKGSQVIKAMMKLGAMATINQVIDQETAQLVAEEMGHKVILRRENELEEAVMSDRDMGAQAEPRAPVVTIMGHVDHGKTSLLDYIRSTKVASGEAGGITQHIGAYHVQTDNGMITFLDTPGHAAFTAMRARGAQATDIVVLVVAADDGVMPQTIEAIQHAKAAKVPVVVAVNKIDKPDADPDRVKNELSQHGIIPEEWGGDCQFVHVSAKAGTGIDELLDAILLQSEVLELKAVRKGMASGVVIESFLDKGRGPVATVLVREGTLNKGDIVLCGFEYGRVRAMRNELNQEVQEAGPSIPVEILGLSGVPAAGDEVTVVRDEKKAREVALYRQGKFREVKLARQQKSKLENMFANMTEGEVHEVNIVLKADVQGSVEAISDSLLKLSTDEVKVKIVGSGVGGITETDATLAAASNAILVGFNVRADASARRVIEAESLDLRYYSVIYNLIDEVKAAMSGMLSPELKQQIIGLAEVRDVFKSPKFGAIAGCMVTEGTIKRHNPIRVLRDNVVIYEGELESLRRFKDDVNEVRNGMECGIGVKNYNDVRVGDMIEVFEIIEIQRSID.

The tract at residues 49–314 (LNREHGSGPD…GSSLQQGFNK (266 aa)) is disordered. Residues 68 to 82 (STLNIQGTGGKSKSV) show a composition bias toward polar residues. 2 stretches are compositionally biased toward basic and acidic residues: residues 93 to 163 (VKRD…EAAE) and 174 to 225 (EVSK…ENAT). The span at 265 to 279 (GRARPAKVARQKKSN) shows a compositional bias: basic residues. Positions 280-293 (KHSESKADREEARA) are enriched in basic and acidic residues. The tr-type G domain maps to 402 to 571 (PRAPVVTIMG…LLQSEVLELK (170 aa)). The tract at residues 411–418 (GHVDHGKT) is G1. 411-418 (GHVDHGKT) serves as a coordination point for GTP. Residues 436 to 440 (GITQH) are G2. A G3 region spans residues 457–460 (DTPG). GTP contacts are provided by residues 457 to 461 (DTPGH) and 511 to 514 (NKID). The segment at 511 to 514 (NKID) is G4. The segment at 547–549 (SAK) is G5.

This sequence belongs to the TRAFAC class translation factor GTPase superfamily. Classic translation factor GTPase family. IF-2 subfamily.

Its subcellular location is the cytoplasm. Its function is as follows. One of the essential components for the initiation of protein synthesis. Protects formylmethionyl-tRNA from spontaneous hydrolysis and promotes its binding to the 30S ribosomal subunits. Also involved in the hydrolysis of GTP during the formation of the 70S ribosomal complex. This chain is Translation initiation factor IF-2, found in Cronobacter sakazakii (strain ATCC BAA-894) (Enterobacter sakazakii).